The chain runs to 448 residues: Trigger factor (448 aa).

The PPIase FKBP-type domain occupies 162-243; the sequence is DDFAIIDIEA…VQQTKERKLP (82 aa). Positions 426–448 are disordered; sequence DEGKAVDPSEYFGEEEESAEESE. The span at 437 to 448 shows a compositional bias: acidic residues; that stretch reads FGEEEESAEESE.

The protein belongs to the FKBP-type PPIase family. Tig subfamily.

It localises to the cytoplasm. It catalyses the reaction [protein]-peptidylproline (omega=180) = [protein]-peptidylproline (omega=0). Functionally, involved in protein export. Acts as a chaperone by maintaining the newly synthesized protein in an open conformation. Functions as a peptidyl-prolyl cis-trans isomerase. This chain is Trigger factor, found in Corynebacterium diphtheriae (strain ATCC 700971 / NCTC 13129 / Biotype gravis).